The primary structure comprises 314 residues: tRNA dimethylallyltransferase (314 aa).

Position 9-16 (9-16 (GPTAVGKT)) interacts with ATP. 11-16 (TAVGKT) provides a ligand contact to substrate. Residues 34-37 (DSVQ) are interaction with substrate tRNA.

Belongs to the IPP transferase family. As to quaternary structure, monomer. The cofactor is Mg(2+).

It catalyses the reaction adenosine(37) in tRNA + dimethylallyl diphosphate = N(6)-dimethylallyladenosine(37) in tRNA + diphosphate. In terms of biological role, catalyzes the transfer of a dimethylallyl group onto the adenine at position 37 in tRNAs that read codons beginning with uridine, leading to the formation of N6-(dimethylallyl)adenosine (i(6)A). The polypeptide is tRNA dimethylallyltransferase (Desulfitobacterium hafniense (strain DSM 10664 / DCB-2)).